Reading from the N-terminus, the 795-residue chain is Protein translocase subunit SecA 2 (795 aa).

ATP contacts are provided by residues Gln84, 102-106 (GEGKT), and Asp496.

It belongs to the SecA family. In terms of assembly, monomer and homodimer. Part of the essential Sec protein translocation apparatus which comprises SecA, SecYEG and auxiliary proteins SecDF. Other proteins may also be involved.

The protein localises to the cell membrane. The protein resides in the cytoplasm. The catalysed reaction is ATP + H2O + cellular proteinSide 1 = ADP + phosphate + cellular proteinSide 2.. Its function is as follows. Part of the Sec protein translocase complex. Interacts with the SecYEG preprotein conducting channel. Has a central role in coupling the hydrolysis of ATP to the transfer of proteins into and across the cell membrane, serving as an ATP-driven molecular motor driving the stepwise translocation of polypeptide chains across the membrane. This Streptococcus agalactiae serotype III (strain NEM316) protein is Protein translocase subunit SecA 2.